The following is a 298-amino-acid chain: ATP synthase gamma chain (298 aa).

Belongs to the ATPase gamma chain family. In terms of assembly, F-type ATPases have 2 components, CF(1) - the catalytic core - and CF(0) - the membrane proton channel. CF(1) has five subunits: alpha(3), beta(3), gamma(1), delta(1), epsilon(1). CF(0) has three main subunits: a, b and c.

It localises to the cell inner membrane. Functionally, produces ATP from ADP in the presence of a proton gradient across the membrane. The gamma chain is believed to be important in regulating ATPase activity and the flow of protons through the CF(0) complex. The chain is ATP synthase gamma chain from Francisella tularensis subsp. tularensis (strain WY96-3418).